A 146-amino-acid polypeptide reads, in one-letter code: Mite group 2 allergen Der f 2 (146 aa).

The signal sequence occupies residues 1–17 (MISKILCLSLLVAAVVA). 3 disulfide bridges follow: Cys-25-Cys-136, Cys-38-Cys-44, and Cys-90-Cys-95.

The protein belongs to the NPC2 family.

Its subcellular location is the secreted. The sequence is that of Mite group 2 allergen Der f 2 (DERF2) from Dermatophagoides farinae (American house dust mite).